Here is a 477-residue protein sequence, read N- to C-terminus: Monocarboxylate transporter 12-B (477 aa).

Residues Met-1–Gly-9 lie on the Cytoplasmic side of the membrane. 12 helical membrane passes run Val-10–Val-30, Ala-58–Ile-78, Ile-86–Thr-106, Gly-116–Ile-136, Ile-148–Ile-168, Leu-178–Ile-198, Phe-253–Tyr-273, Ala-289–Leu-309, Asn-320–Leu-340, Val-344–Ile-364, Val-383–Val-403, and Phe-413–Ile-433. Over Arg-434–Ser-477 the chain is Cytoplasmic.

The protein belongs to the major facilitator superfamily. Monocarboxylate porter (TC 2.A.1.13) family.

It localises to the cell membrane. The protein localises to the basolateral cell membrane. The catalysed reaction is creatine(in) = creatine(out). It catalyses the reaction guanidinoacetate(in) = guanidinoacetate(out). Functions as a transporter for creatine and as well for its precursor guanidinoacetate. Transport of creatine and GAA is independent of resting membrane potential and extracellular Na(+), Cl(-), or pH. Contributes to the process of creatine biosynthesis and distribution. The chain is Monocarboxylate transporter 12-B (slc16a12b) from Danio rerio (Zebrafish).